A 149-amino-acid polypeptide reads, in one-letter code: Nucleoside diphosphate kinase (149 aa).

Residues lysine 9, phenylalanine 57, arginine 85, threonine 91, arginine 102, and asparagine 112 each contribute to the ATP site. Histidine 115 acts as the Pros-phosphohistidine intermediate in catalysis.

This sequence belongs to the NDK family. Mg(2+) serves as cofactor.

The protein resides in the cytoplasm. It catalyses the reaction a 2'-deoxyribonucleoside 5'-diphosphate + ATP = a 2'-deoxyribonucleoside 5'-triphosphate + ADP. It carries out the reaction a ribonucleoside 5'-diphosphate + ATP = a ribonucleoside 5'-triphosphate + ADP. Functionally, major role in the synthesis of nucleoside triphosphates other than ATP. The ATP gamma phosphate is transferred to the NDP beta phosphate via a ping-pong mechanism, using a phosphorylated active-site intermediate. This is Nucleoside diphosphate kinase from Methanosarcina mazei (strain ATCC BAA-159 / DSM 3647 / Goe1 / Go1 / JCM 11833 / OCM 88) (Methanosarcina frisia).